The primary structure comprises 38 residues: Large ribosomal subunit protein bL36 (38 aa).

Belongs to the bacterial ribosomal protein bL36 family.

The polypeptide is Large ribosomal subunit protein bL36 (Pseudomonas entomophila (strain L48)).